The sequence spans 344 residues: Cyclin-dependent kinase 20 (344 aa).

Residues 4–288 (YSILGRIGEG…ARQALLHPYF (285 aa)) enclose the Protein kinase domain. Residues 10 to 18 (IGEGAHGIV) and Lys-33 each bind ATP. Asp-127 acts as the Proton acceptor in catalysis.

It belongs to the protein kinase superfamily. CMGC Ser/Thr protein kinase family. CDC2/CDKX subfamily. In terms of assembly, monomer. Interacts with tbc1d32.

The protein localises to the nucleus. It localises to the cytoplasm. It is found in the cell projection. Its subcellular location is the cilium. It catalyses the reaction L-seryl-[protein] + ATP = O-phospho-L-seryl-[protein] + ADP + H(+). The catalysed reaction is L-threonyl-[protein] + ATP = O-phospho-L-threonyl-[protein] + ADP + H(+). In terms of biological role, involved in cell growth. Activates cdk2, a kinase involved in the control of the cell cycle, by phosphorylating residue 'Thr-160'. Required for high-level Shh responses in the developing neural tube. Together with tbc1d32, controls the structure of the primary cilium by coordinating assembly of the ciliary membrane and axoneme, allowing gli2 to be properly activated in response to SHH signaling. The sequence is that of Cyclin-dependent kinase 20 (cdk20) from Danio rerio (Zebrafish).